Reading from the N-terminus, the 568-residue chain is Probable WRKY transcription factor 34 (568 aa).

A DNA-binding region (WRKY 1) is located at residues 172 to 236 (ACCAPADDGY…YTGDHIHSKP (65 aa)). Zn(2+)-binding residues include cysteine 203, cysteine 208, histidine 231, and histidine 233. Disordered stretches follow at residues 230–252 (DHIH…TGQD) and 337–360 (KRRK…EPRV). Positions 366 to 431 (SDIDILDDGY…YIGKHTHVVP (66 aa)) form a DNA-binding region, WRKY 2. The Zn(2+) site is built by cysteine 397, cysteine 402, histidine 426, and histidine 428.

It belongs to the WRKY group I family.

The protein localises to the nucleus. In terms of biological role, transcription factor. Interacts specifically with the W box (5'-(T)TGAC[CT]-3'), a frequently occurring elicitor-responsive cis-acting element. This is Probable WRKY transcription factor 34 (WRKY34) from Arabidopsis thaliana (Mouse-ear cress).